Consider the following 409-residue polypeptide: Serine/threonine transporter SstT (409 aa).

Transmembrane regions (helical) follow at residues 24–44 (LALGIVIGSVSPQLGLAAGLF), 48–68 (FVGALKAVAPVLVFILVAATI), 82–102 (IIVLYLIGTFSAALTAVIAGM), 142–162 (AIANANYIGILAWALVLGAAL), 194–214 (LGIFGLVSSTIAETGFGALAG), 218–238 (LLAVLLGCMAFIALAVNPAIV), 292–312 (IPLGATVNMGGAAITITVLAM), 319–339 (GIQVDFATALLLSLVATVSAC), and 365–385 (VAMQVVAVGFIIGVIQDSAET).

The protein belongs to the dicarboxylate/amino acid:cation symporter (DAACS) (TC 2.A.23) family.

It localises to the cell inner membrane. The enzyme catalyses L-serine(in) + Na(+)(in) = L-serine(out) + Na(+)(out). It catalyses the reaction L-threonine(in) + Na(+)(in) = L-threonine(out) + Na(+)(out). Functionally, involved in the import of serine and threonine into the cell, with the concomitant import of sodium (symport system). This Neisseria gonorrhoeae (strain NCCP11945) protein is Serine/threonine transporter SstT.